A 443-amino-acid polypeptide reads, in one-letter code: Ribitol-5-phosphate xylosyltransferase 1 (443 aa).

The Cytoplasmic segment spans residues 1–9 (MRLTRKRLC). A helical; Signal-anchor for type II membrane protein transmembrane segment spans residues 10-30 (SFLIALYCLFSLYAAYHVFFG). The Extracellular segment spans residues 31–443 (RRRQAPAGSP…ESSFLMNNKS (413 aa)). A disordered region spans residues 35–76 (APAGSPRGLRKGAAPARERRGREQSTLESEEWNPWEGDEKNE). The span at 50 to 59 (ARERRGREQS) shows a compositional bias: basic and acidic residues.

Belongs to the RXYLT1 family. In terms of assembly, forms a complex composed of FKTN/fukutin, FKRP and RXYLT1/TMEM5.

Its subcellular location is the golgi apparatus membrane. It carries out the reaction 3-O-[Rib-ol-P-Rib-ol-P-3-beta-D-GalNAc-(1-&gt;3)-beta-D-GlcNAc-(1-&gt;4)-(O-6-P-alpha-D-Man)]-Thr-[protein] + UDP-alpha-D-xylose = 3-O-[beta-D-Xyl-(1-&gt;4)-Rib-ol-P-Rib-ol-P-3-beta-D-GalNAc-(1-&gt;3)-beta-D-GlcNAc-(1-&gt;4)-(O-6-P-alpha-D-Man)]-Thr-[protein] + UDP + H(+). It functions in the pathway protein modification; protein glycosylation. Acts as a UDP-D-xylose:ribitol-5-phosphate beta1,4-xylosyltransferase, which catalyzes the transfer of UDP-D-xylose to ribitol 5-phosphate (Rbo5P) to form the Xylbeta1-4Rbo5P linkage on O-mannosyl glycan. Participates in the biosynthesis of the phosphorylated O-mannosyl trisaccharide (N-acetylgalactosamine-beta-3-N-acetylglucosamine-beta-4-(phosphate-6-)mannose), a carbohydrate structure present in alpha-dystroglycan (DAG1), which is required for binding laminin G-like domain-containing extracellular proteins with high affinity. The chain is Ribitol-5-phosphate xylosyltransferase 1 from Homo sapiens (Human).